The primary structure comprises 168 residues: Mediator of RNA polymerase II transcription subunit 7a (168 aa).

Coiled-coil stretches lie at residues 64–92 (KDSNLDYKNELRSLNRELQLHILELADVL) and 132–166 (IMELQIQQRKQAVEDIKRRREEAQRLLKDAYLTLD).

It belongs to the Mediator complex subunit 7 family. Component of the Mediator complex. Interacts with MEE14/CBP1.

Its subcellular location is the nucleus. In terms of biological role, component of the Mediator complex, a coactivator involved in the regulated transcription of nearly all RNA polymerase II-dependent genes. Mediator functions as a bridge to convey information from gene-specific regulatory proteins to the basal RNA polymerase II transcription machinery. The Mediator complex, having a compact conformation in its free form, is recruited to promoters by direct interactions with regulatory proteins and serves for the assembly of a functional pre-initiation complex with RNA polymerase II and the general transcription factors. The protein is Mediator of RNA polymerase II transcription subunit 7a (MED7A) of Arabidopsis thaliana (Mouse-ear cress).